The following is a 129-amino-acid chain: Small ribosomal subunit protein uS11 (129 aa).

This sequence belongs to the universal ribosomal protein uS11 family. In terms of assembly, part of the 30S ribosomal subunit. Interacts with proteins S7 and S18. Binds to IF-3.

Located on the platform of the 30S subunit, it bridges several disparate RNA helices of the 16S rRNA. Forms part of the Shine-Dalgarno cleft in the 70S ribosome. The protein is Small ribosomal subunit protein uS11 of Anoxybacillus flavithermus (strain DSM 21510 / WK1).